A 90-amino-acid polypeptide reads, in one-letter code: uncharacterized protein (90 aa).

This is an uncharacterized protein from Saccharolobus islandicus (Sulfolobus islandicus).